Reading from the N-terminus, the 209-residue chain is RNA chaperone ProQ (209 aa).

Residues 105-148 are disordered; sequence ESQDKAKAKRAALAPKPAAKKAPKKVAVPQRAKTERPAKPAPKA.

Belongs to the ProQ family.

The protein resides in the cytoplasm. RNA chaperone with significant RNA binding, RNA strand exchange and RNA duplexing activities. The polypeptide is RNA chaperone ProQ (Shewanella baltica (strain OS223)).